The following is a 202-amino-acid chain: Large ribosomal subunit protein bL25 (202 aa).

It belongs to the bacterial ribosomal protein bL25 family. CTC subfamily. Part of the 50S ribosomal subunit; part of the 5S rRNA/L5/L18/L25 subcomplex. Contacts the 5S rRNA. Binds to the 5S rRNA independently of L5 and L18.

Its function is as follows. This is one of the proteins that binds to the 5S RNA in the ribosome where it forms part of the central protuberance. This is Large ribosomal subunit protein bL25 from Chlorobium luteolum (strain DSM 273 / BCRC 81028 / 2530) (Pelodictyon luteolum).